A 471-amino-acid chain; its full sequence is U1 small nuclear ribonucleoprotein 70 kDa (471 aa).

Residues 48–78 (FEDPRDAPPPTRAETREERMERKRREKIERR) form a disordered region. Residues 60 to 78 (AETREERMERKRREKIERR) are compositionally biased toward basic and acidic residues. The required for interaction with U1 RNA stretch occupies residues 92 to 205 (HNDQNAQGDA…GGGLGGTRRG (114 aa)). Residues 103–184 (KTLFVARVNY…RRVLVDVERG (82 aa)) enclose the RRM domain. A disordered region spans residues 190 to 471 (WRPRRLGGGL…NGYMMEPPME (282 aa)). Gly residues predominate over residues 195 to 204 (LGGGLGGTRR). Basic and acidic residues predominate over residues 210–246 (NIRHSGRDDTSRYDERDRERERDRRERSREREKEPRE). A compositionally biased stretch (basic residues) spans 247 to 261 (RRRSRSRERRRKSRS). Positions 262–288 (REKEERKRTREKSKDKDKEKDKDNKDR) are enriched in basic and acidic residues. A compositionally biased stretch (basic residues) spans 289 to 298 (DRKRRSRSRE). Residues 299 to 316 (RKRERDRDREKKEERVEA) are compositionally biased toward basic and acidic residues. Positions 317–326 (EVPEADDAPQ) are enriched in acidic residues. The span at 339 to 428 (IELKQEPEEK…RSEKREERVP (90 aa)) shows a compositional bias: basic and acidic residues.

As to quaternary structure, component of the U1 snRNP. The U1 snRNP is composed of the U1 snRNA and the 7 core Sm proteins snrpb, snrpd1, snrpd2, snrpd3, snrpe, snrpf and snrpg that assemble in a heptameric protein ring on the Sm site of the small nuclear RNA to form the core snRNP, and at least three U1 snRNP-specific proteins snrnp70/U1-70K, snrpa/U1-A and snrpc/U1-C.

Its subcellular location is the nucleus speckle. The protein resides in the nucleus. It localises to the nucleoplasm. In terms of biological role, component of the spliceosomal U1 snRNP, which is essential for recognition of the pre-mRNA 5' splice-site and the subsequent assembly of the spliceosome. snrnp70 binds to the loop I region of U1-snRNA. This Xenopus laevis (African clawed frog) protein is U1 small nuclear ribonucleoprotein 70 kDa (snrnp70).